Reading from the N-terminus, the 183-residue chain is Peptide deformylase (183 aa).

Positions 110 and 153 each coordinate Fe cation. The active site involves glutamate 154. Residue histidine 157 coordinates Fe cation.

The protein belongs to the polypeptide deformylase family. Requires Fe(2+) as cofactor.

It carries out the reaction N-terminal N-formyl-L-methionyl-[peptide] + H2O = N-terminal L-methionyl-[peptide] + formate. Functionally, removes the formyl group from the N-terminal Met of newly synthesized proteins. Requires at least a dipeptide for an efficient rate of reaction. N-terminal L-methionine is a prerequisite for activity but the enzyme has broad specificity at other positions. The chain is Peptide deformylase from Listeria monocytogenes serovar 1/2a (strain ATCC BAA-679 / EGD-e).